We begin with the raw amino-acid sequence, 382 residues long: Na(+)/H(+) antiporter NhaA 1 (382 aa).

11 helical membrane passes run 10-30, 45-65, 87-107, 116-136, 145-165, 170-190, 211-231, 252-272, 275-295, 326-346, and 353-373; these read EFSI…NISP, FSFH…IAAA, LLAT…LNAL, GWGI…SLVF, FLLL…ALFY, LPAA…AALL, AGLF…VPFL, LASF…LFGL, AGVT…SLVI, LVGL…GEAF, and GAAK…LAAG.

It belongs to the NhaA Na(+)/H(+) (TC 2.A.33) antiporter family.

Its subcellular location is the cell inner membrane. The enzyme catalyses Na(+)(in) + 2 H(+)(out) = Na(+)(out) + 2 H(+)(in). Na(+)/H(+) antiporter that extrudes sodium in exchange for external protons. This is Na(+)/H(+) antiporter NhaA 1 from Pelobacter propionicus (strain DSM 2379 / NBRC 103807 / OttBd1).